A 928-amino-acid polypeptide reads, in one-letter code: Serine/threonine-protein kinase atg1 (928 aa).

Positions tyrosine 6 to isoleucine 315 constitute a Protein kinase domain. ATP contacts are provided by residues isoleucine 12 to valine 20 and lysine 35. The Proton acceptor role is filled by aspartate 149. Disordered regions lie at residues proline 318–arginine 470 and phenylalanine 544–alanine 571. The span at threonine 359–tyrosine 371 shows a compositional bias: basic and acidic residues. Positions threonine 437 to glutamate 452 are enriched in polar residues. Composition is skewed to basic and acidic residues over residues glutamine 459–arginine 470 and serine 548–tyrosine 564.

It belongs to the protein kinase superfamily. Ser/Thr protein kinase family. APG1/unc-51/ULK1 subfamily. In terms of assembly, homodimer. Forms a ternary complex with ATG13 and ATG17.

It is found in the cytoplasm. The protein localises to the preautophagosomal structure membrane. It catalyses the reaction L-seryl-[protein] + ATP = O-phospho-L-seryl-[protein] + ADP + H(+). It carries out the reaction L-threonyl-[protein] + ATP = O-phospho-L-threonyl-[protein] + ADP + H(+). In terms of biological role, serine/threonine protein kinase involved in the cytoplasm to vacuole transport (Cvt) and found to be essential in autophagy, where it is required for the formation of autophagosomes. Involved in the clearance of protein aggregates which cannot be efficiently cleared by the proteasome. Required for selective autophagic degradation of the nucleus (nucleophagy) as well as for mitophagy which contributes to regulate mitochondrial quantity and quality by eliminating the mitochondria to a basal level to fulfill cellular energy requirements and preventing excess ROS production. Also involved in endoplasmic reticulum-specific autophagic process, in selective removal of ER-associated degradation (ERAD) substrates. Plays a key role in ATG9 and ATG23 cycling through the pre-autophagosomal structure and is necessary to promote ATG18 binding to ATG9 through phosphorylation of ATG9. Catalyzes phosphorylation of ATG4, decreasing the interaction between ATG4 and ATG8 and impairing deconjugation of PE-conjugated forms of ATG8. This is Serine/threonine-protein kinase atg1 from Aspergillus clavatus (strain ATCC 1007 / CBS 513.65 / DSM 816 / NCTC 3887 / NRRL 1 / QM 1276 / 107).